The primary structure comprises 579 residues: Potassium-transporting ATPase potassium-binding subunit (579 aa).

A run of 10 helical transmembrane segments spans residues 2–22 (MNLVLQYGLYILILVVLAIPL), 66–86 (SFSVLAFSIISLIVLFLIHIF), 135–155 (GLTVQNFVSAAVGISVLFALI), 177–197 (VLYILIPLSIVVSLALVSQGV), 262–282 (LSNLFEMISLLLIPVALCFTF), 292–312 (GIAIFIAMGIMLVVAMGIIGV), 391–411 (VFGGVGCGLYGMIGFAILAVF), 437–457 (VLVCLATPIAILIGSGIASIL), 490–510 (FAGFAANTPFINISIGLSMLF), and 546–566 (FIGLLIFVVLLIGALSFFPAL).

This sequence belongs to the KdpA family. The system is composed of three essential subunits: KdpA, KdpB and KdpC.

It is found in the cell membrane. In terms of biological role, part of the high-affinity ATP-driven potassium transport (or Kdp) system, which catalyzes the hydrolysis of ATP coupled with the electrogenic transport of potassium into the cytoplasm. This subunit binds the extracellular potassium ions and delivers the ions to the membrane domain of KdpB through an intramembrane tunnel. This chain is Potassium-transporting ATPase potassium-binding subunit, found in Clostridium botulinum (strain Alaska E43 / Type E3).